A 383-amino-acid chain; its full sequence is Putative 8-amino-7-oxononanoate synthase (383 aa).

A substrate-binding site is contributed by Arg-22. Residue 109–110 (GY) coordinates pyridoxal 5'-phosphate. Substrate is bound at residue His-134. Pyridoxal 5'-phosphate-binding positions include Ser-182, 207-210 (DDAH), and 236-239 (TLSK). Lys-239 carries the N6-(pyridoxal phosphate)lysine modification. Thr-348 contacts substrate.

Belongs to the class-II pyridoxal-phosphate-dependent aminotransferase family. BioF subfamily. As to quaternary structure, homodimer. Requires pyridoxal 5'-phosphate as cofactor.

The enzyme catalyses 6-carboxyhexanoyl-[ACP] + L-alanine + H(+) = (8S)-8-amino-7-oxononanoate + holo-[ACP] + CO2. The protein operates within cofactor biosynthesis; biotin biosynthesis. Functionally, catalyzes the decarboxylative condensation of pimeloyl-[acyl-carrier protein] and L-alanine to produce 8-amino-7-oxononanoate (AON), [acyl-carrier protein], and carbon dioxide. This Caulobacter sp. (strain K31) protein is Putative 8-amino-7-oxononanoate synthase (bioF).